The following is a 322-amino-acid chain: Daunorubicin resistance ATP-binding protein DrrA2 (322 aa).

The ABC transporter domain occupies 6-236 (VRAEAMEKRY…VGGDRIEVVV (231 aa)). 38-45 (GPNGAGKT) contacts ATP.

It belongs to the ABC transporter superfamily. Drug exporter-1 (DrugE1) (TC 3.A.1.105) family. The complex is probably composed of two ATP-binding proteins (DrrA2) and two transmembrane proteins (DrrB2).

The protein localises to the cell membrane. The catalysed reaction is daunorubicin(in) + ATP + H2O = daunorubicin(out) + ADP + phosphate + H(+). Its function is as follows. Part of the ABC transporter complex DrrA2B2 involved in daunorubicin efflux. Responsible for energy coupling to the transport system. Confers self-resistance to daunorubicin, an antibiotic produced by S.coeruleorubidus. The sequence is that of Daunorubicin resistance ATP-binding protein DrrA2 from Streptomyces coeruleorubidus.